A 548-amino-acid chain; its full sequence is MKKVTAMLFSMAVGLNAVSMAAKAKASEEQETDVLLIGGGIMSATLGTYLRELEPEWSMTMVERLEGVAQESSNGWNNAGTGHSALMELNYTPQNADGSISIEKAVAINEAFQISRQFWAHQVERGVLRTPRSFINTVPHMSFVWGEDNVNFLRARYAALQQSSLFRGMRYSEDHAQIKEWAPLVMEGRDPQQKVAATRTEIGTDVNYGEITRQLIASLQKKSNFSLQLSSEVRALKRNDDNTWTVTVADLKNGTAQNIRAKFVFIGAGGAALKLLQESGIPEAKDYAGFPVGGQFLVSENPDVVNHHLAKVYGKASVGAPPMSVPHIDTRVLDGKRVVLFGPFATFSTKFLKNGSLWDLMSSTTTSNVMPMMHVGLDNFDLVKYLVSQVMLSEEDRFEALKEYYPQAKKEDWRLWQAGQRVQIIKRDADKGGVLRLGTEVVSDQQGTIAALLGASPGASTAAPIMLDLLEKVFGDRVSSPQWQATLKAIVPSYGRKLNGDVAATERELQYTSEVLGLKYDKPQAADSTPKPQLKPQPVQKEVADIAL.

Positions Asp521–Leu548 are disordered. Residues Pro530 to Lys541 show a composition bias toward low complexity.

Belongs to the MQO family. FAD is required as a cofactor.

It carries out the reaction (S)-malate + a quinone = a quinol + oxaloacetate. It participates in carbohydrate metabolism; tricarboxylic acid cycle; oxaloacetate from (S)-malate (quinone route): step 1/1. This Shigella sonnei (strain Ss046) protein is Probable malate:quinone oxidoreductase.